A 174-amino-acid polypeptide reads, in one-letter code: Mitochondrial holo-[acyl-carrier-protein] synthase (174 aa).

This sequence belongs to the P-Pant transferase superfamily. AcpS family.

Its subcellular location is the mitochondrion. It catalyses the reaction apo-[ACP] + CoA = holo-[ACP] + adenosine 3',5'-bisphosphate + H(+). In terms of biological role, transfers the 4'-phosphopantetheine moiety from coenzyme A to a Ser of mitochondrial acyl-carrier-protein. This Eremothecium gossypii (strain ATCC 10895 / CBS 109.51 / FGSC 9923 / NRRL Y-1056) (Yeast) protein is Mitochondrial holo-[acyl-carrier-protein] synthase (PPT2).